A 215-amino-acid polypeptide reads, in one-letter code: Small ribosomal subunit protein uS3c (215 aa).

The region spanning 43-116 (IKNYIKKNMK…KLNMAITRIA (74 aa)) is the KH type-2 domain.

It belongs to the universal ribosomal protein uS3 family. As to quaternary structure, part of the 30S ribosomal subunit.

It is found in the plastid. It localises to the chloroplast. The chain is Small ribosomal subunit protein uS3c (rps3) from Morus indica (Mulberry).